The following is a 554-amino-acid chain: Calcium-dependent protein kinase 3 (554 aa).

Residues 30-55 (KKKSSNKSIKSQHKFEGSKIANKNNE) form a disordered region. The Protein kinase domain maps to 110–365 (NLSEEPLGKG…ASEALKHPWF (256 aa)). ATP is bound by residues 116 to 124 (LGKGTYGCV) and Lys-139. Asp-230 (proton acceptor) is an active-site residue. Residues 385–393 (NFKNYALLL) carry the J domain autoinhibitory motif motif. The interval 385 to 420 (NFKNYALLLKLQKLAMTIIAQQSNDYDLQQLKTVFL) is j domain. The short motif at 394-403 (KLQKLAMTII) is the J domain EF-hand interaction motif element. 4 consecutive EF-hand domains span residues 410–445 (YDLQ…SGLK), 448–479 (QNFD…DRKH), 480–515 (LSKK…GNKK), and 521–554 (KDVN…KLKY). Positions 458, 460, 462, 464, 469, 493, 495, 497, 499, 504, 534, 536, 538, 540, and 545 each coordinate Ca(2+).

It belongs to the protein kinase superfamily. Ser/Thr protein kinase family. CDPK subfamily. Mg(2+) serves as cofactor.

The protein localises to the cytoplasm. The enzyme catalyses L-seryl-[protein] + ATP = O-phospho-L-seryl-[protein] + ADP + H(+). It catalyses the reaction L-threonyl-[protein] + ATP = O-phospho-L-threonyl-[protein] + ADP + H(+). With respect to regulation, activated by calcium. Upon calcium binding to the EF-hand domain 2, the C-terminus of the junction domain (J domain) undergoes a conformational change which results in the dissociation of the pseudo-substrate inhibitory motif from the catalytic domain. This, in turn, may facilitate the autophosphorylation of the activation loop at Thr-271, which leads to the kinase activation. In terms of biological role, calcium-dependent protein kinase which acts as a sensor and effector of intracellular Ca(2+) levels probably in part downstream of cGMP-activated PKG kinase. In the mosquito midgut, regulates the gliding motility of the ookinete which is essential for the ookinete to invade the midgut epithelium. However, another study showed that while required for ookinete invasion of the midgut epithelium, is not required for ookinete gliding motility. In Plasmodium berghei (strain Anka), this protein is Calcium-dependent protein kinase 3.